The primary structure comprises 170 residues: Putative pre-16S rRNA nuclease (170 aa).

Basic and acidic residues predominate over residues 1–18 (MGTDDRLPDRPGADDPGR). The segment at 1–22 (MGTDDRLPDRPGADDPGRGRRI) is disordered.

It belongs to the YqgF nuclease family.

It is found in the cytoplasm. In terms of biological role, could be a nuclease involved in processing of the 5'-end of pre-16S rRNA. This Mycolicibacterium smegmatis (strain ATCC 700084 / mc(2)155) (Mycobacterium smegmatis) protein is Putative pre-16S rRNA nuclease.